Reading from the N-terminus, the 110-residue chain is Large ribosomal subunit protein uL22 (110 aa).

This sequence belongs to the universal ribosomal protein uL22 family. As to quaternary structure, part of the 50S ribosomal subunit.

Its function is as follows. This protein binds specifically to 23S rRNA; its binding is stimulated by other ribosomal proteins, e.g. L4, L17, and L20. It is important during the early stages of 50S assembly. It makes multiple contacts with different domains of the 23S rRNA in the assembled 50S subunit and ribosome. The globular domain of the protein is located near the polypeptide exit tunnel on the outside of the subunit, while an extended beta-hairpin is found that lines the wall of the exit tunnel in the center of the 70S ribosome. The protein is Large ribosomal subunit protein uL22 of Shewanella loihica (strain ATCC BAA-1088 / PV-4).